A 570-amino-acid polypeptide reads, in one-letter code: Urease subunit alpha (570 aa).

A Urease domain is found at 131 to 570 (GGFDSHIHFI…LPMAQRYFMY (440 aa)). Residues histidine 136, histidine 138, and lysine 219 each contribute to the Ni(2+) site. Lysine 219 is modified (N6-carboxylysine). A substrate-binding site is contributed by histidine 221. Ni(2+)-binding residues include histidine 248 and histidine 274. The active-site Proton donor is the histidine 322. Residue aspartate 362 coordinates Ni(2+).

This sequence belongs to the metallo-dependent hydrolases superfamily. Urease alpha subunit family. In terms of assembly, heterotrimer of UreA (gamma), UreB (beta) and UreC (alpha) subunits. Three heterotrimers associate to form the active enzyme. It depends on Ni cation as a cofactor. Carboxylation allows a single lysine to coordinate two nickel ions.

It is found in the cytoplasm. It catalyses the reaction urea + 2 H2O + H(+) = hydrogencarbonate + 2 NH4(+). It functions in the pathway nitrogen metabolism; urea degradation; CO(2) and NH(3) from urea (urease route): step 1/1. The protein is Urease subunit alpha of Rhodopseudomonas palustris (strain HaA2).